A 132-amino-acid polypeptide reads, in one-letter code: Large ribosomal subunit protein uL14 (132 aa).

Belongs to the universal ribosomal protein uL14 family. In terms of assembly, part of the 50S ribosomal subunit. Forms a cluster with proteins L3 and L24e, part of which may contact the 16S rRNA in 2 intersubunit bridges.

Binds to 23S rRNA. Forms part of two intersubunit bridges in the 70S ribosome. This is Large ribosomal subunit protein uL14 from Methanosarcina acetivorans (strain ATCC 35395 / DSM 2834 / JCM 12185 / C2A).